Consider the following 677-residue polypeptide: Polyunsaturated fatty acid lipoxygenase ALOX15B (677 aa).

Positions 2–125 (AKFRVRVSTG…ELVLREGAAK (124 aa)) constitute a PLAT domain. Gly15, Gly17, Asp39, His40, Gly42, Glu44, Asp86, and Ala87 together coordinate Ca(2+). The 552-residue stretch at 126–677 (VSWQDHHRTL…PPLIENSVSI (552 aa)) folds into the Lipoxygenase domain. Fe cation contacts are provided by His374, His379, His554, and Ile677.

The protein belongs to the lipoxygenase family. Fe cation serves as cofactor.

It is found in the cytoplasm. It localises to the cytosol. The protein resides in the cell membrane. Its subcellular location is the cytoskeleton. The protein localises to the membrane. It is found in the cell junction. It localises to the adherens junction. The protein resides in the focal adhesion. Its subcellular location is the nucleus. The catalysed reaction is (5Z,8Z,11Z,14Z)-eicosatetraenoate + O2 = (15S)-hydroperoxy-(5Z,8Z,11Z,13E)-eicosatetraenoate. It catalyses the reaction (9Z,12Z)-octadecadienoate + O2 = 13-hydroperoxy-(9Z,11E)-octadecadienoate. It carries out the reaction (5S)-hydroxy-(6E,8Z,11Z,14Z)-eicosatetraenoate + O2 = (5S)-hydroxy-(15S)-hydroperoxy-(6E,8Z,11Z,13E)-eicosatetraenoate. The enzyme catalyses (5Z,8Z,11Z,14Z)-eicosatetraenoate + O2 = 5-hydroperoxy-(6E,8Z,11Z,14Z)-eicosatetraenoate. The catalysed reaction is (5S,6R)-dihydroxy-(7E,9E,11Z,14Z)-eicosatetraenoate + O2 = (5S,6R)-dihydroxy-(15S)-hydroperoxy-(7E,9E,11Z,13E)-eicosatetraenoate. It catalyses the reaction (5S)-hydroperoxy-(6E,8Z,11Z,14Z)-eicosatetraenoate + O2 = (5S,15S)-dihydroperoxy-(6E,8Z,11Z,13E)-eicosatetraenoate. It carries out the reaction 2-(5Z,8Z,11Z,14Z-eicosatetraenoyl)-glycerol + O2 = 2-[15(S)-hydroperoxy-(5Z,8Z,11Z,13E)-eicosatetraenoyl]-glycerol. The enzyme catalyses (8S)-hydroperoxy-(5Z,9E,11Z,14Z)-eicosatetraenoate + O2 = (8S,15S)-dihydroperoxy-(5Z,9E,11Z,13E)-eicosatetraenoate. The catalysed reaction is N-(5Z,8Z,11Z,14Z)-eicosatetraenoyl-L-alanine + O2 = N-(15S)-hydroperoxy-(5Z,8Z,11Z,13E)-eicosatetraenoyl-alanine. It catalyses the reaction N-(5Z,8Z,11Z,14Z)-eicosatetraenoyl-gamma-aminobutanoate + O2 = N-(15S)-hydroperoxy-(5Z,8Z,11Z,13E)-eicosatetraenoyl-gamma-aminobutanoate. It carries out the reaction N-(5Z,8Z,11Z,14Z)-eicosatetraenoyl-glycine + O2 = N-(15S)-hydroperoxy-(5Z,8Z,11Z,13E)-eicosatetraenoyl-glycine. The enzyme catalyses N-(5Z,8Z,11Z,14Z)-eicosatetraenoyl-taurine + O2 = N-(15S)-hydroperoxy-(5Z,8Z,11Z,13E)-eicosatetraenoyl-taurine. The catalysed reaction is 2-(5Z,8Z,11Z,14Z-eicosatetraenoyl)-glycerol + O2 = 2-[12-hydroperoxy-(5Z,8Z,10E,14Z)-eicosatetraenoyl]-glycerol. It catalyses the reaction 1-octadecanoyl-2-(5Z,8Z,11Z,14Z-eicosatetraenoyl)-sn-glycero-3-phosphocholine + O2 = 1-octadecanoyl-2-(15-hydroperoxy-5Z,8Z,11Z,13E-eicosatetraenoyl)-sn-glycero-3-phosphocholine. It carries out the reaction a 1-acyl-2-(5Z,8Z,11Z,14Z-eicosatetraenoyl)-sn-glycero-3-phospho-(1D-myo-inositol) + O2 = a 1-acyl-2-(15-hydroperoxy-5Z,8Z,11Z,13E-eicosatetraenoyl)-sn-glycero-3-phospho-(1D-myo-inositol). The enzyme catalyses a 1-acyl-2-(8Z,11Z,14Z-eicosatrienoyl)-sn-glycero-3-phospho-(1D-myo-inositol) + O2 = a 1-acyl-2-(15-hydroperoxy-8Z,11Z,13E-eicosatrienoyl)-sn-glycero-3-phospho-(1D-myo-inositol). The catalysed reaction is 1-octadecanoyl-2-(5Z,8Z,11Z,14Z)-eicosatetraenoyl-sn-glycero-3-phosphoethanolamine + O2 = 1-octadecanoyl-2-(15-hydroperoxy-5Z,8Z,11Z,13E-eicosatetraenoyl)-sn-glycero-3-phosphoethanolamine. It catalyses the reaction 1-octadecanoyl-2-(5Z,8Z,11Z,14Z-eicosatetraenoyl)-sn-glycero-3-phospho-(1D-myo-inositol) + O2 = 1-octadecanoyl-2-(15-hydroperoxy-5Z,8Z,11Z,13E-eicosatetraenoyl)-sn-glycero-3-phospho-(1D-myo-inositol). It carries out the reaction (8Z,11Z,14Z)-eicosatrienoate + O2 = 15-hydroperoxy-(8Z,11Z,13E)-eicosatrienoate. The enzyme catalyses (7S)-hydroperoxy-(4Z,8E,10Z,13Z,16Z,19Z)-docosahexaenoate + O2 = (7S,17S)-dihydroperoxy-(4Z,8E,10Z,13Z,15E,19Z)-docosahexaenoate. Its pathway is lipid metabolism; hydroperoxy eicosatetraenoic acid biosynthesis. In terms of biological role, non-heme iron-containing dioxygenase that catalyzes the stereo-specific peroxidation of free and esterified polyunsaturated fatty acids (PUFAs) generating a spectrum of bioactive lipid mediators. Inserts a peroxyl group at C15 of arachidonate ((5Z,8Z,11Z,14Z)-eicosatetraenoate) producing (15S)-hydroperoxyeicosatetraenoate/(15S)-HPETE. Also peroxidizes linoleate ((9Z,12Z)-octadecadienoate) to 13-hydroperoxyoctadecadienoate/13-HPODE. Oxygenates arachidonyl derivatives such as 2-arachidonoylglycerol (2-AG) leading to the production and extracellular release of 15-hydroxyeicosatetraenoyl glycerol (15-HETE-G) that acts as a peroxisome proliferator-activated receptor alpha agonist. Has the ability to efficiently class-switch ALOX5 pro-inflammatory mediators into anti-inflammatory intermediates. Participates in the sequential oxidations of DHA ((4Z,7Z,10Z,13Z,16Z,19Z)-docosahexaenoate) to generate specialized pro-resolving mediators (SPMs) resolvin D5 ((7S,17S)-diHPDHA), which can actively down-regulate the immune response and have anti-aggregation properties with platelets. In addition to free PUFAs hydrolyzed from phospholipids, it directly oxidizes PUFAs esterified to membrane-bound phospholipids. Has no detectable 8S-lipoxygenase activity on arachidonate but reacts with (8S)-HPETE to produce (8S,15S)-diHPETE. May regulate progression through the cell cycle and cell proliferation. May also regulate cytokine secretion by macrophages and therefore play a role in the immune response. May also regulate macrophage differentiation into proatherogenic foam cells. In Rattus norvegicus (Rat), this protein is Polyunsaturated fatty acid lipoxygenase ALOX15B.